A 329-amino-acid polypeptide reads, in one-letter code: Short-chain dehydrogenase/reductase prx4 (329 aa).

Residues Ser58, Ile60, and Asn81 each coordinate NADP(+). Residue Asn91 is glycosylated (N-linked (GlcNAc...) asparagine). NADP(+) contacts are provided by Asp98, Asn121, Lys161, Tyr194, Lys198, and Thr229. The active-site Proton acceptor is Tyr194. Lys198 (lowers pKa of active site Tyr) is an active-site residue. Residues 238–258 (GPLMAAGLPVSSAHMVGLAVV) traverse the membrane as a helical segment.

This sequence belongs to the short-chain dehydrogenases/reductases (SDR) family.

The protein localises to the membrane. It functions in the pathway sesquiterpene biosynthesis. Its function is as follows. Short-chain dehydrogenase/reductase; part of the gene cluster that mediates the biosynthesis of PR-toxin, a bicyclic sesquiterpene belonging to the eremophilane class and acting as a mycotoxin. The first step of the pathway is catalyzed by the aristolochene synthase which performs the cyclization of trans,trans-farnesyl diphosphate (FPP) to the bicyclic sesquiterpene aristolochene. Following the formation of aristolochene, the non-oxygenated aristolochene is converted to the trioxygenated intermediate eremofortin B, via 7-epi-neopetasone. This conversion appears to involve three enzymes, a hydroxysterol oxidase-like enzyme, the quinone-oxidase prx3 that forms the quinone-type-structure in the bicyclic nucleus of aristolochene with the C8-oxo group and the C-3 hydroxyl group, and the P450 monooxygenase ORF6 that introduces the epoxide at the double bond between carbons 1 and 2. No monoxy or dioxy-intermediates have been reported to be released to the broth, so these three early oxidative reactions may be coupled together. Eremofortin B is further oxidized by another P450 monooxygenase, that introduces a second epoxide between carbons 7 and 11 prior to acetylation to eremofortin A by the acetyltransferase ORF8. The second epoxidation may be performed by a second P450 monooxygenase. After the acetylation step, eremofortin A is converted to eremofortin C and then to PR-toxin. First the conversion of eremofortin A to eremofortin C proceeds by oxidation of the side chain of the molecule at C-12 and is catalyzed by the short-chain oxidoreductase prx1. The cytochrome P450 monooxygenase ORF6 is probably also involved in this step. The primary alcohol formed at C-12 is finally oxidized by the short-chain alcohol dehydrogenase prx4 that forms PR-toxin. This is Short-chain dehydrogenase/reductase prx4 from Penicillium roqueforti.